Reading from the N-terminus, the 255-residue chain is Putative ankyrin repeat protein R880 (255 aa).

ANK repeat units follow at residues 79–109, 110–139, 141–169, 171–199, and 201–229; these read SGIN…DIHY, KTDY…NINT, DCYA…NVRK, RDLA…DVRS, and KNYA…NFRV.

The polypeptide is Putative ankyrin repeat protein R880 (Acanthamoeba polyphaga (Amoeba)).